The sequence spans 129 residues: Follitropin subunit beta (129 aa).

The N-terminal stretch at 1-19 (MKSVQFCFLFCCWRAICCR) is a signal peptide. 6 cysteine pairs are disulfide-bonded: Cys-21–Cys-69, Cys-35–Cys-84, Cys-38–Cys-122, Cys-46–Cys-100, Cys-50–Cys-102, and Cys-105–Cys-112. Residues Asn-25 and Asn-42 are each glycosylated (N-linked (GlcNAc...) asparagine).

The protein belongs to the glycoprotein hormones subunit beta family. In terms of assembly, heterodimer. The active follitropin is a heterodimer composed of an alpha chain/CGA shared with other hormones and a unique beta chain/FSHB shown here.

It is found in the secreted. Together with the alpha chain CGA constitutes follitropin, the follicle-stimulating hormone, and provides its biological specificity to the hormone heterodimer. Binds FSHR, a G protein-coupled receptor, on target cells to activate downstream signaling pathways. Follitropin is involved in follicle development and spermatogenesis in reproductive organs. The chain is Follitropin subunit beta (FSHB) from Ovis aries (Sheep).